Here is a 618-residue protein sequence, read N- to C-terminus: Cationic amino acid transporter 3 (618 aa).

The Cytoplasmic segment spans residues 1-36 (MLWQALRRFGQKLVRRRVLELGMGETRLARCLSTLD). A helical transmembrane segment spans residues 37–57 (LVALGVGSTLGAGVYVLAGEV). At 58 to 61 (AKDK) the chain is on the extracellular side. The chain crosses the membrane as a helical span at residues 62–82 (AGPSIVICFLVAALSSVLAGL). The Cytoplasmic segment spans residues 83-107 (CYAEFGARVPGSGSAYLYSYVTVGE). A helical transmembrane segment spans residues 108 to 128 (LWAFTTGWNLILSYVIGTASV). The Extracellular segment spans residues 129-162 (ARAWSSAFDNLIGNHISRTLKGTILLKMPHVLAE). A helical membrane pass occupies residues 163–183 (YPDFFALALVLLLTGLLVLGA). At 184–191 (SKSALVTK) the chain is on the cytoplasmic side. The chain crosses the membrane as a helical span at residues 192–212 (VFTGMNLLVLSFVIISGFIKG). At 213 to 244 (ELRNWKLTKEDYCLTMSESNGTCSLDSMGSGG) the chain is on the extracellular side. N-linked (GlcNAc...) asparagine glycosylation is present at N232. A helical membrane pass occupies residues 245–265 (FMPFGLEGILRGAATCFYAFV). Residues 266–285 (GFDCIATTGEEAQNPQRSIP) lie on the Cytoplasmic side of the membrane. Residues 286–306 (MGIVISMFICFLAYFGVSSAL) traverse the membrane as a helical segment. The Extracellular portion of the chain corresponds to 307 to 335 (TLMMPYYKLHPESPLPEAFSYVGWEPARY). Residues 336–356 (LVAIGSLCALSTSLLGSMFPM) form a helical membrane-spanning segment. Residues 357 to 380 (PRVMYSMAEDGLLFRVLAKVHSVT) are Cytoplasmic-facing. A helical membrane pass occupies residues 381 to 401 (HIPIVATLVSGVIAAFMAFLF). At 402–406 (ELTDL) the chain is on the extracellular side. Residues 407-427 (VDLMSIGTLLAHSLVSICVLI) form a helical membrane-spanning segment. At 428 to 474 (LRYQPDQEMKSVEEEMELQEETLEAEKLTVQALFCPVNSIPTLLSGR) the chain is on the cytoplasmic side. A helical transmembrane segment spans residues 475–495 (VVYVCSSLLAVLLTVLCLVLT). The Extracellular portion of the chain corresponds to 496 to 506 (WWTTPLRSGDP). A helical transmembrane segment spans residues 507-527 (VWVTVVVLILGLILAISGVIW). Residues 528 to 539 (RQPQNRTPLHFK) are Cytoplasmic-facing. A helical transmembrane segment spans residues 540–560 (VPAVPLLPLVSIFVNVYLMMQ). Over 561–568 (MTAGTWAR) the chain is Extracellular. Residues 569-589 (FGIWMLIGFAIYFGYGIQHSM) form a helical membrane-spanning segment. Topologically, residues 590-618 (KEVKNHQTLPKTRAQTIDLDLTTSCVHSI) are cytoplasmic. T605 is modified (phosphothreonine). The residue at position 617 (S617) is a Phosphoserine.

The protein belongs to the amino acid-polyamine-organocation (APC) superfamily. Cationic amino acid transporter (CAT) (TC 2.A.3.3) family. N-glycosylated. In terms of tissue distribution, expressed in adult brain and in a wide variety of embryonic tissues.

Its subcellular location is the cell membrane. It carries out the reaction L-arginine(in) = L-arginine(out). The enzyme catalyses L-lysine(in) = L-lysine(out). The catalysed reaction is L-ornithine(in) = L-ornithine(out). In terms of biological role, uniporter that mediates the uptake of cationic L-amino acids such as L-arginine, L-lysine and L-ornithine. The transport is sodium ions- and pH-independent, moderately trans-stimulated and is mediated by passive diffusion. The sequence is that of Cationic amino acid transporter 3 from Mus musculus (Mouse).